A 401-amino-acid polypeptide reads, in one-letter code: 2-amino-3-carboxymuconate-6-semialdehyde decarboxylase (401 aa).

Zn(2+) contacts are provided by His-18 and His-20. Substrate is bound at residue Arg-59. His-234 and Asp-352 together coordinate Zn(2+).

It belongs to the metallo-dependent hydrolases superfamily. ACMSD family. As to quaternary structure, monomer.

It catalyses the reaction 2-amino-3-carboxymuconate 6-semialdehyde + H(+) = 2-aminomuconate 6-semialdehyde + CO2. The protein operates within secondary metabolite metabolism; quinolate metabolism. Converts alpha-amino-beta-carboxymuconate-epsilon-semialdehyde (ACMS) to alpha-aminomuconate semialdehyde (AMS). This is 2-amino-3-carboxymuconate-6-semialdehyde decarboxylase from Caenorhabditis elegans.